A 379-amino-acid chain; its full sequence is Galactose-1-phosphate uridylyltransferase (379 aa).

Basic and acidic residues predominate over residues M1–Q10. The tract at residues M1–M20 is disordered. Residue C75 participates in Zn(2+) binding. Residues A81, N97–D98, and N173 contribute to the UDP-alpha-D-glucose site. H184 is a binding site for Zn(2+). H186 functions as the Tele-UMP-histidine intermediate in the catalytic mechanism. UDP-alpha-D-glucose is bound at residue Q188. 4 residues coordinate Zn(2+): E202, H301, H319, and H321. Residues K334–V337 and Y339–E340 each bind UDP-alpha-D-glucose.

It belongs to the galactose-1-phosphate uridylyltransferase type 1 family. In terms of assembly, homodimer. Zn(2+) serves as cofactor.

It catalyses the reaction alpha-D-galactose 1-phosphate + UDP-alpha-D-glucose = alpha-D-glucose 1-phosphate + UDP-alpha-D-galactose. Its pathway is carbohydrate metabolism; galactose metabolism. In terms of biological role, plays an important role in galactose metabolism. The chain is Galactose-1-phosphate uridylyltransferase (Galt) from Mus musculus (Mouse).